Consider the following 82-residue polypeptide: Cytochrome c oxidase-assembly factor cox-23, mitochondrial (82 aa).

The interval M1–E27 is disordered. Basic and acidic residues predominate over residues E7–E27. A CHCH domain is found at L29–R71. 2 short sequence motifs (cx9C motif) span residues C32 to C42 and C53 to C63. Cystine bridges form between C32-C63 and C42-C53.

The protein belongs to the COX23 family.

Its subcellular location is the mitochondrion intermembrane space. Functionally, required for the assembly of cytochrome c oxidase. The protein is Cytochrome c oxidase-assembly factor cox-23, mitochondrial (cox-23) of Neurospora crassa (strain ATCC 24698 / 74-OR23-1A / CBS 708.71 / DSM 1257 / FGSC 987).